We begin with the raw amino-acid sequence, 367 residues long: MSNEADLLHGPLEDRHRDLGASFAEFGGWLMPVSYAGTVSEHNATRNAVGLFDVSHLGKALVRGTGAARFVNSALTNDLNRIGPGKAQYTLCCNESGGVIDDLIAYYVDDDEIFLVPNAANTAAVVEALQGAAPAGVTVSNLHRSYAVLAVQGPRSADVLAELGLPSDMDYMAYADTSFRQVPVRVCRTGYTGEHGYELLPPWESAGVVFDALAAAVSQAGGQPAGLGARDTLRTEMGYPLHGHELSPDISPLQARCGWAIGWKKEAFFGRDALLAEKEAGPRRLLRGLRMVGRGVLRAGLTVLVGDTPVGVTTSGTFSPTLQAGIALALIDTDADVRDGQKVTVDVRGRAATCEVVRPPFVAVKTR.

This sequence belongs to the GcvT family. In terms of assembly, the glycine cleavage system is composed of four proteins: P, T, L and H.

It carries out the reaction N(6)-[(R)-S(8)-aminomethyldihydrolipoyl]-L-lysyl-[protein] + (6S)-5,6,7,8-tetrahydrofolate = N(6)-[(R)-dihydrolipoyl]-L-lysyl-[protein] + (6R)-5,10-methylene-5,6,7,8-tetrahydrofolate + NH4(+). Functionally, the glycine cleavage system catalyzes the degradation of glycine. The protein is Aminomethyltransferase of Mycobacterium avium (strain 104).